The following is a 452-amino-acid chain: Eukaryotic translation initiation factor 3 subunit E (452 aa).

Positions 257 to 426 (TDLFFSPAYI…GTVIMNHPPQ (170 aa)) constitute a PCI domain.

The protein belongs to the eIF-3 subunit E family. In terms of assembly, component of the eukaryotic translation initiation factor 3 (eIF-3) complex.

It localises to the cytoplasm. Its function is as follows. Component of the eukaryotic translation initiation factor 3 (eIF-3) complex, which is involved in protein synthesis of a specialized repertoire of mRNAs and, together with other initiation factors, stimulates binding of mRNA and methionyl-tRNAi to the 40S ribosome. The eIF-3 complex specifically targets and initiates translation of a subset of mRNAs involved in cell proliferation. The polypeptide is Eukaryotic translation initiation factor 3 subunit E (int6) (Aspergillus niger (strain ATCC MYA-4892 / CBS 513.88 / FGSC A1513)).